The sequence spans 395 residues: D-serine dehydratase (395 aa).

Residue lysine 46 is modified to N6-(pyridoxal phosphate)lysine. Pyridoxal 5'-phosphate contacts are provided by tyrosine 184, tyrosine 191, threonine 232, glycine 254, and asparagine 255. Zn(2+)-binding residues include histidine 365 and cysteine 367.

It belongs to the DSD1 family. Requires pyridoxal 5'-phosphate as cofactor. The cofactor is Zn(2+).

The enzyme catalyses D-serine = pyruvate + NH4(+). Functionally, catalyzes the conversion of D-serine to pyruvate and ammonia. Plays a role in D-serine detoxification. In Dictyostelium discoideum (Social amoeba), this protein is D-serine dehydratase.